A 256-amino-acid polypeptide reads, in one-letter code: 1-(5-phosphoribosyl)-5-[(5-phosphoribosylamino)methylideneamino] imidazole-4-carboxamide isomerase (256 aa).

Catalysis depends on Asp-8, which acts as the Proton acceptor. Asp-130 serves as the catalytic Proton donor.

It belongs to the HisA/HisF family.

It localises to the cytoplasm. The enzyme catalyses 1-(5-phospho-beta-D-ribosyl)-5-[(5-phospho-beta-D-ribosylamino)methylideneamino]imidazole-4-carboxamide = 5-[(5-phospho-1-deoxy-D-ribulos-1-ylimino)methylamino]-1-(5-phospho-beta-D-ribosyl)imidazole-4-carboxamide. It participates in amino-acid biosynthesis; L-histidine biosynthesis; L-histidine from 5-phospho-alpha-D-ribose 1-diphosphate: step 4/9. The protein is 1-(5-phosphoribosyl)-5-[(5-phosphoribosylamino)methylideneamino] imidazole-4-carboxamide isomerase of Chlorobium phaeobacteroides (strain DSM 266 / SMG 266 / 2430).